Reading from the N-terminus, the 358-residue chain is ATP synthase gamma chain, chloroplastic (358 aa).

Residues 1–35 constitute a chloroplast transit peptide; it reads MAAMLASKQGAFMGRSSFAPAPKGVASRGSLQVVA. The active site involves Cys-123. A disulfide bridge links Cys-233 with Cys-239.

Belongs to the ATPase gamma chain family. F-type ATPases have 2 components, F(1) - the catalytic core - and F(0) - the membrane proton channel. F(1) has five subunits: alpha(3), beta(3), gamma(1), delta(1), epsilon(1). F(0) has four main subunits: a(1), b(1), b'(1) and c(10-14). The alpha and beta chains form an alternating ring which encloses part of the gamma chain. F(1) is attached to F(0) by a central stalk formed by the gamma and epsilon chains, while a peripheral stalk is formed by the delta, b and b' chains.

The protein resides in the plastid. It is found in the chloroplast thylakoid membrane. Its function is as follows. F(1)F(0) ATP synthase produces ATP from ADP in the presence of a proton or sodium gradient. F-type ATPases consist of two structural domains, F(1) containing the extramembraneous catalytic core and F(0) containing the membrane proton channel, linked together by a central stalk and a peripheral stalk. During catalysis, ATP synthesis in the catalytic domain of F(1) is coupled via a rotary mechanism of the central stalk subunits to proton translocation. In terms of biological role, produces ATP from ADP in the presence of a proton gradient across the membrane. The gamma chain is believed to be important in regulating ATPase activity and the flow of protons through the CF(0) complex. The protein is ATP synthase gamma chain, chloroplastic of Chlamydomonas reinhardtii (Chlamydomonas smithii).